Here is a 480-residue protein sequence, read N- to C-terminus: Cysteine--tRNA ligase (480 aa).

A Zn(2+)-binding site is contributed by Cys29. The 'HIGH' region signature appears at 31 to 41 (VTVYDHCHIGH). Zn(2+) is bound by residues Cys209, His234, and Glu238. The 'KMSKS' region signature appears at 266-270 (KMSKS). Lys269 serves as a coordination point for ATP.

It belongs to the class-I aminoacyl-tRNA synthetase family. In terms of assembly, monomer. It depends on Zn(2+) as a cofactor.

The protein resides in the cytoplasm. It carries out the reaction tRNA(Cys) + L-cysteine + ATP = L-cysteinyl-tRNA(Cys) + AMP + diphosphate. The chain is Cysteine--tRNA ligase from Geobacter sp. (strain M21).